A 351-amino-acid chain; its full sequence is Small ribosomal subunit biogenesis GTPase RsgA (351 aa).

A compositionally biased stretch (basic residues) spans 1–12 (MAKHKLSKGQQR). A disordered region spans residues 1–37 (MAKHKLSKGQQRRVRENHQRRLKKQDNKPEMDDNQLG). Over residues 13–31 (RVRENHQRRLKKQDNKPEM) the composition is skewed to basic and acidic residues. Positions 112 to 274 (YYDGIKPIAA…VIDSPGVREF (163 aa)) constitute a CP-type G domain. GTP is bound by residues 160–163 (NKID) and 214–222 (GQSGVGKSS). Zn(2+) is bound by residues Cys298, Cys303, His305, and Cys311.

The protein belongs to the TRAFAC class YlqF/YawG GTPase family. RsgA subfamily. As to quaternary structure, monomer. Associates with 30S ribosomal subunit, binds 16S rRNA. Requires Zn(2+) as cofactor.

It localises to the cytoplasm. One of several proteins that assist in the late maturation steps of the functional core of the 30S ribosomal subunit. Helps release RbfA from mature subunits. May play a role in the assembly of ribosomal proteins into the subunit. Circularly permuted GTPase that catalyzes slow GTP hydrolysis, GTPase activity is stimulated by the 30S ribosomal subunit. In Photorhabdus laumondii subsp. laumondii (strain DSM 15139 / CIP 105565 / TT01) (Photorhabdus luminescens subsp. laumondii), this protein is Small ribosomal subunit biogenesis GTPase RsgA.